A 442-amino-acid chain; its full sequence is Trigger factor (442 aa).

In terms of domain architecture, PPIase FKBP-type spans 176–259; that stretch reads GDFISLSLYV…VNAVIEISSP (84 aa).

The protein belongs to the FKBP-type PPIase family. Tig subfamily.

Its subcellular location is the cytoplasm. It carries out the reaction [protein]-peptidylproline (omega=180) = [protein]-peptidylproline (omega=0). In terms of biological role, involved in protein export. Acts as a chaperone by maintaining the newly synthesized protein in an open conformation. Functions as a peptidyl-prolyl cis-trans isomerase. The polypeptide is Trigger factor (tig) (Chlamydia trachomatis serovar D (strain ATCC VR-885 / DSM 19411 / UW-3/Cx)).